A 133-amino-acid chain; its full sequence is Interleukin-4 (133 aa).

Residues 1–24 form the signal peptide; that stretch reads MGLTSQLIPTLVCLLVCTSNFAHG. Disulfide bonds link Cys27–Cys133, Cys48–Cys85, and Cys70–Cys105. 4 N-linked (GlcNAc...) asparagine glycosylation sites follow: Asn62, Asn96, Asn102, and Asn108.

It belongs to the IL-4/IL-13 family.

The protein localises to the secreted. Functionally, participates in at least several B-cell activation processes as well as of other cell types. It is a costimulator of DNA-synthesis. It induces the expression of class II MHC molecules on resting B-cells. It enhances both secretion and cell surface expression of IgE and IgG1. It also regulates the expression of the low affinity Fc receptor for IgE (CD23) on both lymphocytes and monocytes. Positively regulates IL31RA expression in macrophages. Stimulates autophagy in dendritic cells by interfering with mTORC1 signaling and through the induction of RUFY4. The protein is Interleukin-4 (IL4) of Lama glama (Llama).